The sequence spans 287 residues: Lys-63-specific deubiquitinase (287 aa).

In terms of domain architecture, MPN spans 33–176 (VHLESDAFLV…YTCFQSVQAQ (144 aa)). Residues H119, H121, and D132 each contribute to the Zn(2+) site. The JAMM motif motif lies at 119–132 (HSHPHITVWPSHVD). Residues 256 to 283 (LQWLEDRLEQNKQSIITLQKEKELLTQE) are a coiled coil.

It belongs to the peptidase M67A family. BRCC36 subfamily. In terms of assembly, monomer. Homodimer. Component of the BRISC complex, at least composed of abraxas2, brcc3, babam1 and babam2. Interacts with abraxas2; the interaction is direct and may form a heterotetramer. Component of the BRCA1-A complex. Both the BRCA1-A complex and the BRISC complex bind polyubiquitin. It depends on Zn(2+) as a cofactor.

The protein resides in the nucleus. It localises to the cytoplasm. It is found in the cytoskeleton. Its subcellular location is the spindle pole. Its function is as follows. Metalloprotease that specifically cleaves 'Lys-63'-linked polyubiquitin chains, leaving the last ubiquitin chain attached to its substrates. Catalytic subunit of the BRISC complex, a multiprotein complex that specifically cleaves 'Lys-63'-linked ubiquitin in various substrates; brcc3 does not have activity by itself, but needs to be associated into a higher-order assembly, for minimal in vitro activity. The protein is Lys-63-specific deubiquitinase of Danio rerio (Zebrafish).